A 755-amino-acid chain; its full sequence is Thermostable beta-glucosidase B (755 aa).

Asp231 is a catalytic residue.

It belongs to the glycosyl hydrolase 3 family.

The enzyme catalyses Hydrolysis of terminal, non-reducing beta-D-glucosyl residues with release of beta-D-glucose.. It functions in the pathway glycan metabolism; cellulose degradation. The sequence is that of Thermostable beta-glucosidase B (bglB) from Acetivibrio thermocellus (strain ATCC 27405 / DSM 1237 / JCM 9322 / NBRC 103400 / NCIMB 10682 / NRRL B-4536 / VPI 7372) (Clostridium thermocellum).